We begin with the raw amino-acid sequence, 613 residues long: Dihydroxy-acid dehydratase (613 aa).

Residue D81 coordinates Mg(2+). C122 is a [2Fe-2S] cluster binding site. The Mg(2+) site is built by D123 and K124. At K124 the chain carries N6-carboxylysine. C195 contacts [2Fe-2S] cluster. Position 491 (E491) interacts with Mg(2+). Catalysis depends on S517, which acts as the Proton acceptor.

The protein belongs to the IlvD/Edd family. In terms of assembly, homodimer. Requires [2Fe-2S] cluster as cofactor. Mg(2+) serves as cofactor.

The catalysed reaction is (2R)-2,3-dihydroxy-3-methylbutanoate = 3-methyl-2-oxobutanoate + H2O. The enzyme catalyses (2R,3R)-2,3-dihydroxy-3-methylpentanoate = (S)-3-methyl-2-oxopentanoate + H2O. It functions in the pathway amino-acid biosynthesis; L-isoleucine biosynthesis; L-isoleucine from 2-oxobutanoate: step 3/4. The protein operates within amino-acid biosynthesis; L-valine biosynthesis; L-valine from pyruvate: step 3/4. Functionally, functions in the biosynthesis of branched-chain amino acids. Catalyzes the dehydration of (2R,3R)-2,3-dihydroxy-3-methylpentanoate (2,3-dihydroxy-3-methylvalerate) into 2-oxo-3-methylpentanoate (2-oxo-3-methylvalerate) and of (2R)-2,3-dihydroxy-3-methylbutanoate (2,3-dihydroxyisovalerate) into 2-oxo-3-methylbutanoate (2-oxoisovalerate), the penultimate precursor to L-isoleucine and L-valine, respectively. The chain is Dihydroxy-acid dehydratase from Aeromonas salmonicida (strain A449).